A 227-amino-acid chain; its full sequence is Phosphoribosylformylglycinamidine synthase subunit PurQ (227 aa).

The Glutamine amidotransferase type-1 domain occupies 2–227 (RWAIVRFPGA…FLGLVREVAR (226 aa)). Cysteine 85 functions as the Nucleophile in the catalytic mechanism. Residues histidine 200 and glutamate 202 contribute to the active site.

Part of the FGAM synthase complex composed of 1 PurL, 1 PurQ and 2 PurS subunits.

The protein localises to the cytoplasm. The catalysed reaction is N(2)-formyl-N(1)-(5-phospho-beta-D-ribosyl)glycinamide + L-glutamine + ATP + H2O = 2-formamido-N(1)-(5-O-phospho-beta-D-ribosyl)acetamidine + L-glutamate + ADP + phosphate + H(+). The enzyme catalyses L-glutamine + H2O = L-glutamate + NH4(+). Its pathway is purine metabolism; IMP biosynthesis via de novo pathway; 5-amino-1-(5-phospho-D-ribosyl)imidazole from N(2)-formyl-N(1)-(5-phospho-D-ribosyl)glycinamide: step 1/2. In terms of biological role, part of the phosphoribosylformylglycinamidine synthase complex involved in the purines biosynthetic pathway. Catalyzes the ATP-dependent conversion of formylglycinamide ribonucleotide (FGAR) and glutamine to yield formylglycinamidine ribonucleotide (FGAM) and glutamate. The FGAM synthase complex is composed of three subunits. PurQ produces an ammonia molecule by converting glutamine to glutamate. PurL transfers the ammonia molecule to FGAR to form FGAM in an ATP-dependent manner. PurS interacts with PurQ and PurL and is thought to assist in the transfer of the ammonia molecule from PurQ to PurL. The sequence is that of Phosphoribosylformylglycinamidine synthase subunit PurQ from Thermus thermophilus (strain ATCC BAA-163 / DSM 7039 / HB27).